A 130-amino-acid polypeptide reads, in one-letter code: Phosphoribosyl-AMP cyclohydrolase (130 aa).

Asp78 serves as a coordination point for Mg(2+). Cys79 contacts Zn(2+). Mg(2+)-binding residues include Asp80 and Asp82. The Zn(2+) site is built by Cys96 and Cys103.

Belongs to the PRA-CH family. As to quaternary structure, homodimer. It depends on Mg(2+) as a cofactor. Zn(2+) serves as cofactor.

Its subcellular location is the cytoplasm. The enzyme catalyses 1-(5-phospho-beta-D-ribosyl)-5'-AMP + H2O = 1-(5-phospho-beta-D-ribosyl)-5-[(5-phospho-beta-D-ribosylamino)methylideneamino]imidazole-4-carboxamide. It functions in the pathway amino-acid biosynthesis; L-histidine biosynthesis; L-histidine from 5-phospho-alpha-D-ribose 1-diphosphate: step 3/9. In terms of biological role, catalyzes the hydrolysis of the adenine ring of phosphoribosyl-AMP. This chain is Phosphoribosyl-AMP cyclohydrolase, found in Nitrosospira multiformis (strain ATCC 25196 / NCIMB 11849 / C 71).